A 930-amino-acid chain; its full sequence is Translation initiation factor IF-2 (930 aa).

Residues 50–67 (FKPAAAPKVEAKPAAPKV) are compositionally biased toward low complexity. Disordered stretches follow at residues 50-195 (FKPA…PRID) and 260-346 (EVVP…HELP). Composition is skewed to basic and acidic residues over residues 68–90 (SAEK…EAKP) and 110–125 (FKAE…AERR). Low complexity predominate over residues 129–141 (KGNNRDQQQNGNR). Basic and acidic residues-rich tracts occupy residues 157–167 (RDNRRFNDQAK) and 262–295 (VPEK…DGPR). The span at 309-318 (NQKNSNWNNN) shows a compositional bias: low complexity. Positions 337 to 346 (VTERKFHELP) are enriched in basic and acidic residues. The region spanning 432–599 (ERPPVVTIMG…TVLLVAEIQE (168 aa)) is the tr-type G domain. The segment at 441-448 (GHVDHGKT) is G1. 441-448 (GHVDHGKT) lines the GTP pocket. The interval 466-470 (GITQH) is G2. Residues 487-490 (DTPG) form a G3 region. GTP is bound by residues 487–491 (DTPGH) and 541–544 (NKID). Positions 541–544 (NKID) are G4. The tract at residues 577 to 579 (SAK) is G5.

This sequence belongs to the TRAFAC class translation factor GTPase superfamily. Classic translation factor GTPase family. IF-2 subfamily.

Its subcellular location is the cytoplasm. One of the essential components for the initiation of protein synthesis. Protects formylmethionyl-tRNA from spontaneous hydrolysis and promotes its binding to the 30S ribosomal subunits. Also involved in the hydrolysis of GTP during the formation of the 70S ribosomal complex. This is Translation initiation factor IF-2 from Streptococcus pneumoniae (strain ATCC BAA-255 / R6).